A 316-amino-acid polypeptide reads, in one-letter code: Protease HtpX homolog (316 aa).

A helical membrane pass occupies residues 16–36 (LFMALGFTIGGTGGAMIALVV). Residue histidine 130 participates in Zn(2+) binding. Residue glutamate 131 is part of the active site. Zn(2+) is bound at residue histidine 134. A run of 2 helical transmembrane segments spans residues 145 to 165 (MTAT…FFGA) and 174 to 194 (LATI…QMAI). Glutamate 199 is a Zn(2+) binding site. Residues 285–316 (PNFAALSERRGSVSSVPRTRRRSSALDPNGRG) form a disordered region.

This sequence belongs to the peptidase M48B family. Zn(2+) serves as cofactor.

It localises to the cell inner membrane. The polypeptide is Protease HtpX homolog (Rhizorhabdus wittichii (strain DSM 6014 / CCUG 31198 / JCM 15750 / NBRC 105917 / EY 4224 / RW1) (Sphingomonas wittichii)).